Consider the following 481-residue polypeptide: Glutamyl-tRNA(Gln) amidotransferase subunit A (481 aa).

Catalysis depends on charge relay system residues lysine 75 and serine 150. The Acyl-ester intermediate role is filled by serine 174.

The protein belongs to the amidase family. GatA subfamily. Heterotrimer of A, B and C subunits.

The catalysed reaction is L-glutamyl-tRNA(Gln) + L-glutamine + ATP + H2O = L-glutaminyl-tRNA(Gln) + L-glutamate + ADP + phosphate + H(+). Functionally, allows the formation of correctly charged Gln-tRNA(Gln) through the transamidation of misacylated Glu-tRNA(Gln) in organisms which lack glutaminyl-tRNA synthetase. The reaction takes place in the presence of glutamine and ATP through an activated gamma-phospho-Glu-tRNA(Gln). The chain is Glutamyl-tRNA(Gln) amidotransferase subunit A from Macrococcus caseolyticus (strain JCSC5402) (Macrococcoides caseolyticum).